Here is a 219-residue protein sequence, read N- to C-terminus: uncharacterized protein (219 aa).

3 stretches are compositionally biased toward basic and acidic residues: residues 1-20 (METPIEREIRRSCEREESLR), 30-39 (AGRELVELRV), and 156-170 (QEVRAVREREQELQR). Residues 1–195 (METPIEREIR…PSLTASRGDG (195 aa)) are disordered.

It belongs to the MISP family.

This is an uncharacterized protein from Homo sapiens (Human).